The primary structure comprises 738 residues: Glucan 1,4-alpha-glucosidase SusB (738 aa).

The signal sequence occupies residues 1 to 21 (MKKRKILSLIAFLCISFIANA). Glutamate 194 lines the Ca(2+) pocket. Substrate-binding positions include 215-217 (PNS), 437-439 (HHE), and 507-508 (HE). Ca(2+) is bound by residues glutamate 508, glutamate 526, and glutamate 532. The active-site Proton donor/acceptor is the glutamate 532.

The protein belongs to the glycosyl hydrolase 97 family. Monomer. Ca(2+) is required as a cofactor.

Its subcellular location is the periplasm. The enzyme catalyses Hydrolysis of terminal (1-&gt;4)-linked alpha-D-glucose residues successively from non-reducing ends of the chains with release of beta-D-glucose.. Its pathway is glycan degradation; starch degradation. Functionally, glucoamylase that hydrolyzes alpha-1,4-glucosidic linkages, alpha-1,6-, alpha-1,3- and alpha-1,2-glucosidic linkages during starch degradation. This is Glucan 1,4-alpha-glucosidase SusB (susB) from Bacteroides thetaiotaomicron (strain ATCC 29148 / DSM 2079 / JCM 5827 / CCUG 10774 / NCTC 10582 / VPI-5482 / E50).